Here is a 154-residue protein sequence, read N- to C-terminus: Myoglobin (154 aa).

The region spanning 2-148 is the Globin domain; the sequence is GLSDGEWQLV…FRKDIAAKYK (147 aa). Serine 4 is subject to Phosphoserine. Histidine 65 serves as a coordination point for nitrite. Residue histidine 65 participates in O2 binding. At threonine 68 the chain carries Phosphothreonine. Histidine 94 contributes to the heme b binding site.

The protein belongs to the globin family. As to quaternary structure, monomeric.

Its subcellular location is the cytoplasm. The protein localises to the sarcoplasm. It catalyses the reaction Fe(III)-heme b-[protein] + nitric oxide + H2O = Fe(II)-heme b-[protein] + nitrite + 2 H(+). The enzyme catalyses H2O2 + AH2 = A + 2 H2O. In terms of biological role, monomeric heme protein which primary function is to store oxygen and facilitate its diffusion within muscle tissues. Reversibly binds oxygen through a pentacoordinated heme iron and enables its timely and efficient release as needed during periods of heightened demand. Depending on the oxidative conditions of tissues and cells, and in addition to its ability to bind oxygen, it also has a nitrite reductase activity whereby it regulates the production of bioactive nitric oxide. Under stress conditions, like hypoxia and anoxia, it also protects cells against reactive oxygen species thanks to its pseudoperoxidase activity. The protein is Myoglobin (MB) of Peponocephala electra (Melon-headed whale).